Reading from the N-terminus, the 624-residue chain is Phosphatidylinositol 4-kinase lsb6 (624 aa).

Polar residues predominate over residues 1 to 31 (MESTFHSDTLDSFPNYQENSLNTNEEQTNPL). Residues 1–53 (MESTFHSDTLDSFPNYQENSLNTNEEQTNPLESLRDGWASSNSSSSSSLLLPD) are disordered. Low complexity predominate over residues 40–51 (SSNSSSSSSLLL). One can recognise a PI3K/PI4K catalytic domain in the interval 145–520 (GVFPVLISKG…LLELPNLYVV (376 aa)). The G-loop stretch occupies residues 151–157 (ISKGSSG). Residues 346–354 (RNTDRNLDN) are catalytic loop. Positions 409 to 429 (AIDNSLAFPYKHPDSWRSFPY) are activation loop.

Belongs to the PI3/PI4-kinase family. The cofactor is Mg(2+). Requires Mn(2+) as cofactor.

Its subcellular location is the cell membrane. It localises to the vacuole membrane. It is found in the golgi apparatus membrane. The enzyme catalyses a 1,2-diacyl-sn-glycero-3-phospho-(1D-myo-inositol) + ATP = a 1,2-diacyl-sn-glycero-3-phospho-(1D-myo-inositol 4-phosphate) + ADP + H(+). Functionally, may play a role in endocytic and/or exocytic pathways. This is Phosphatidylinositol 4-kinase lsb6 (lsb6) from Schizosaccharomyces pombe (strain 972 / ATCC 24843) (Fission yeast).